Reading from the N-terminus, the 478-residue chain is tRNA (adenine(58)-N(1))-methyltransferase non-catalytic subunit TRM6 (478 aa).

Positions 456–478 are disordered; that stretch reads SENATAADSSEKLAEHGAKKQKI. A compositionally biased stretch (basic and acidic residues) spans 464-478; sequence SSEKLAEHGAKKQKI.

This sequence belongs to the TRM6/GCD10 family. In terms of assembly, heterotetramer; composed of two copies of TRM6/GCD10 and two copies of TRM61/GCD14.

The protein resides in the nucleus. In terms of biological role, substrate-binding subunit of tRNA (adenine-N(1)-)-methyltransferase, which catalyzes the formation of N(1)-methyladenine at position 58 (m1A58) in initiator methionyl-tRNA. Also required for repression of GCN4 mRNA translation by the upstream open reading frames (uORFs) under conditions of amino acid sufficiency. In Saccharomyces cerevisiae (strain ATCC 204508 / S288c) (Baker's yeast), this protein is tRNA (adenine(58)-N(1))-methyltransferase non-catalytic subunit TRM6 (GCD10).